A 313-amino-acid polypeptide reads, in one-letter code: Ribosomal RNA small subunit methyltransferase H (313 aa).

S-adenosyl-L-methionine contacts are provided by residues 35 to 37 (GGH), D55, F81, D103, and Q110.

This sequence belongs to the methyltransferase superfamily. RsmH family.

The protein localises to the cytoplasm. It catalyses the reaction cytidine(1402) in 16S rRNA + S-adenosyl-L-methionine = N(4)-methylcytidine(1402) in 16S rRNA + S-adenosyl-L-homocysteine + H(+). In terms of biological role, specifically methylates the N4 position of cytidine in position 1402 (C1402) of 16S rRNA. The polypeptide is Ribosomal RNA small subunit methyltransferase H (Pseudomonas paraeruginosa (strain DSM 24068 / PA7) (Pseudomonas aeruginosa (strain PA7))).